Here is a 55-residue protein sequence, read N- to C-terminus: Large ribosomal subunit protein bL33 (55 aa).

This sequence belongs to the bacterial ribosomal protein bL33 family.

The sequence is that of Large ribosomal subunit protein bL33 from Blochmanniella pennsylvanica (strain BPEN).